Consider the following 487-residue polypeptide: Glutamyl-tRNA(Gln) amidotransferase subunit A (487 aa).

Active-site charge relay system residues include K77 and S152. S176 (acyl-ester intermediate) is an active-site residue.

This sequence belongs to the amidase family. GatA subfamily. In terms of assembly, heterotrimer of A, B and C subunits.

The enzyme catalyses L-glutamyl-tRNA(Gln) + L-glutamine + ATP + H2O = L-glutaminyl-tRNA(Gln) + L-glutamate + ADP + phosphate + H(+). In terms of biological role, allows the formation of correctly charged Gln-tRNA(Gln) through the transamidation of misacylated Glu-tRNA(Gln) in organisms which lack glutaminyl-tRNA synthetase. The reaction takes place in the presence of glutamine and ATP through an activated gamma-phospho-Glu-tRNA(Gln). The protein is Glutamyl-tRNA(Gln) amidotransferase subunit A of Limosilactobacillus fermentum (strain NBRC 3956 / LMG 18251) (Lactobacillus fermentum).